The chain runs to 431 residues: Gamma-glutamyl phosphate reductase (431 aa).

Belongs to the gamma-glutamyl phosphate reductase family.

Its subcellular location is the cytoplasm. The enzyme catalyses L-glutamate 5-semialdehyde + phosphate + NADP(+) = L-glutamyl 5-phosphate + NADPH + H(+). It participates in amino-acid biosynthesis; L-proline biosynthesis; L-glutamate 5-semialdehyde from L-glutamate: step 2/2. Its function is as follows. Catalyzes the NADPH-dependent reduction of L-glutamate 5-phosphate into L-glutamate 5-semialdehyde and phosphate. The product spontaneously undergoes cyclization to form 1-pyrroline-5-carboxylate. The protein is Gamma-glutamyl phosphate reductase of Synechococcus elongatus (strain ATCC 33912 / PCC 7942 / FACHB-805) (Anacystis nidulans R2).